Reading from the N-terminus, the 644-residue chain is Ribonuclease R (644 aa).

Positions 211–529 constitute an RNB domain; it reads RINYSHIPFI…LHRLLKELLF (319 aa). Residues 573–644 enclose the S1 motif domain; it reads LELLEKEFLG…ITERIKEHVS (72 aa).

It belongs to the RNR ribonuclease family. RNase R subfamily.

It is found in the cytoplasm. The enzyme catalyses Exonucleolytic cleavage in the 3'- to 5'-direction to yield nucleoside 5'-phosphates.. Its function is as follows. 3'-5' exoribonuclease that releases 5'-nucleoside monophosphates and is involved in maturation of structured RNAs. The protein is Ribonuclease R of Helicobacter pylori (strain ATCC 700392 / 26695) (Campylobacter pylori).